A 460-amino-acid polypeptide reads, in one-letter code: Cysteine--tRNA ligase (460 aa).

Cys28 serves as a coordination point for Zn(2+). The 'HIGH' region signature appears at 30–40 (MTVYDYCHLGH). Residues Cys209, His234, and Glu238 each contribute to the Zn(2+) site. A 'KMSKS' region motif is present at residues 266-270 (KMSKS). Lys269 provides a ligand contact to ATP.

Belongs to the class-I aminoacyl-tRNA synthetase family. As to quaternary structure, monomer. The cofactor is Zn(2+).

It localises to the cytoplasm. It catalyses the reaction tRNA(Cys) + L-cysteine + ATP = L-cysteinyl-tRNA(Cys) + AMP + diphosphate. This is Cysteine--tRNA ligase from Pseudomonas syringae pv. tomato (strain ATCC BAA-871 / DC3000).